We begin with the raw amino-acid sequence, 888 residues long: Dilute domain-containing protein YPR089W (888 aa).

Positions 360–745 constitute a Dilute domain; the sequence is DIVLQSYWLS…KKFLNNKIKD (386 aa). Disordered regions lie at residues 462–504, 805–827, and 865–888; these read KEQQ…NNSS, KQRQNEPQISRTNSGTSDFTGDE, and LNIPSSTAQRPAWSNNDDMEQNPW. 2 stretches are compositionally biased toward polar residues: residues 809-823 and 867-880; these read NEPQISRTNSGTSDF and IPSSTAQRPAWSNN.

The protein resides in the golgi apparatus. The sequence is that of Dilute domain-containing protein YPR089W from Saccharomyces cerevisiae (strain ATCC 204508 / S288c) (Baker's yeast).